Here is a 448-residue protein sequence, read N- to C-terminus: Probable glycine dehydrogenase (decarboxylating) subunit 1 (448 aa).

Belongs to the GcvP family. N-terminal subunit subfamily. In terms of assembly, the glycine cleavage system is composed of four proteins: P, T, L and H. In this organism, the P 'protein' is a heterodimer of two subunits.

The enzyme catalyses N(6)-[(R)-lipoyl]-L-lysyl-[glycine-cleavage complex H protein] + glycine + H(+) = N(6)-[(R)-S(8)-aminomethyldihydrolipoyl]-L-lysyl-[glycine-cleavage complex H protein] + CO2. Its function is as follows. The glycine cleavage system catalyzes the degradation of glycine. The P protein binds the alpha-amino group of glycine through its pyridoxal phosphate cofactor; CO(2) is released and the remaining methylamine moiety is then transferred to the lipoamide cofactor of the H protein. The polypeptide is Probable glycine dehydrogenase (decarboxylating) subunit 1 (Parvibaculum lavamentivorans (strain DS-1 / DSM 13023 / NCIMB 13966)).